Here is a 352-residue protein sequence, read N- to C-terminus: Quinolinate synthase (352 aa).

Iminosuccinate is bound by residues His48 and Ser69. Residue Cys114 participates in [4Fe-4S] cluster binding. Residues 140 to 142 (YAN) and Ser157 contribute to the iminosuccinate site. Cys201 contributes to the [4Fe-4S] cluster binding site. Iminosuccinate is bound by residues 227–229 (HPE) and Thr244. [4Fe-4S] cluster is bound at residue Cys298.

It belongs to the quinolinate synthase family. Type 1 subfamily. The cofactor is [4Fe-4S] cluster.

Its subcellular location is the cytoplasm. The catalysed reaction is iminosuccinate + dihydroxyacetone phosphate = quinolinate + phosphate + 2 H2O + H(+). It functions in the pathway cofactor biosynthesis; NAD(+) biosynthesis; quinolinate from iminoaspartate: step 1/1. Functionally, catalyzes the condensation of iminoaspartate with dihydroxyacetone phosphate to form quinolinate. This chain is Quinolinate synthase, found in Pseudomonas syringae pv. tomato (strain ATCC BAA-871 / DC3000).